Consider the following 55-residue polypeptide: Major pollen allergen Dac g 4 (55 aa).

This Dactylis glomerata (Orchard grass) protein is Major pollen allergen Dac g 4.